The chain runs to 1424 residues: Putative disease resistance protein At3g14460 (1424 aa).

Positions 152-454 constitute an NB-ARC domain; sequence WRQASRSRPD…AIDLLYQPRS (303 aa). Residue 200–207 coordinates ATP; the sequence is GMPGVGKT. LRR repeat units follow at residues 498 to 523, 552 to 571, 572 to 595, 597 to 618, 620 to 641, 642 to 665, and 806 to 830; these read VSGD…HFSF, PTSL…LLNA, LSGL…LKGL, LLRY…VCTL, NLQT…SIAE, LINL…IKKL, and LPSL…FFFG. 2 disordered regions span residues 911–977 and 1050–1070; these read FRRS…PKDR and IKSS…QYDD. 2 stretches are compositionally biased toward polar residues: residues 912–927 and 934–972; these read RRSL…SIPS and SSPT…SLSS. LRR repeat units lie at residues 1090 to 1114, 1118 to 1139, 1238 to 1262, 1264 to 1286, and 1310 to 1336; these read PQNL…LTES, LHEL…HPPT, TPKL…LFGL, SLLS…GFPS, and LENL…LLPK.

Belongs to the disease resistance NB-LRR family.

In terms of biological role, potential disease resistance protein. This Arabidopsis thaliana (Mouse-ear cress) protein is Putative disease resistance protein At3g14460.